The primary structure comprises 479 residues: Ribosomal RNA small subunit methyltransferase F (479 aa).

S-adenosyl-L-methionine contacts are provided by residues 125–131 (AAAPGSK), Glu-149, Asp-176, and Asp-194. The active-site Nucleophile is Cys-247.

This sequence belongs to the class I-like SAM-binding methyltransferase superfamily. RsmB/NOP family.

It is found in the cytoplasm. It catalyses the reaction cytidine(1407) in 16S rRNA + S-adenosyl-L-methionine = 5-methylcytidine(1407) in 16S rRNA + S-adenosyl-L-homocysteine + H(+). In terms of biological role, specifically methylates the cytosine at position 1407 (m5C1407) of 16S rRNA. This Salmonella arizonae (strain ATCC BAA-731 / CDC346-86 / RSK2980) protein is Ribosomal RNA small subunit methyltransferase F.